The sequence spans 674 residues: DNA ligase (674 aa).

NAD(+) contacts are provided by residues 35–39 (DYDFD), 84–85 (SL), and E118. K120 acts as the N6-AMP-lysine intermediate in catalysis. 4 residues coordinate NAD(+): R141, E184, K297, and K321. Zn(2+)-binding residues include C415, C418, C433, and C439. The region spanning 598–674 (LVNTNFEGLT…ITEDEFDALL (77 aa)) is the BRCT domain.

It belongs to the NAD-dependent DNA ligase family. LigA subfamily. Mg(2+) serves as cofactor. It depends on Mn(2+) as a cofactor.

It catalyses the reaction NAD(+) + (deoxyribonucleotide)n-3'-hydroxyl + 5'-phospho-(deoxyribonucleotide)m = (deoxyribonucleotide)n+m + AMP + beta-nicotinamide D-nucleotide.. In terms of biological role, DNA ligase that catalyzes the formation of phosphodiester linkages between 5'-phosphoryl and 3'-hydroxyl groups in double-stranded DNA using NAD as a coenzyme and as the energy source for the reaction. It is essential for DNA replication and repair of damaged DNA. This Chlorobium phaeovibrioides (strain DSM 265 / 1930) (Prosthecochloris vibrioformis (strain DSM 265)) protein is DNA ligase.